The following is a 299-amino-acid chain: 4-diphosphocytidyl-2-C-methyl-D-erythritol kinase (299 aa).

Residue K17 is part of the active site. An ATP-binding site is contributed by P103–G113. D145 is an active-site residue.

It belongs to the GHMP kinase family. IspE subfamily.

The enzyme catalyses 4-CDP-2-C-methyl-D-erythritol + ATP = 4-CDP-2-C-methyl-D-erythritol 2-phosphate + ADP + H(+). The protein operates within isoprenoid biosynthesis; isopentenyl diphosphate biosynthesis via DXP pathway; isopentenyl diphosphate from 1-deoxy-D-xylulose 5-phosphate: step 3/6. In terms of biological role, catalyzes the phosphorylation of the position 2 hydroxy group of 4-diphosphocytidyl-2C-methyl-D-erythritol. This Bartonella tribocorum (strain CIP 105476 / IBS 506) protein is 4-diphosphocytidyl-2-C-methyl-D-erythritol kinase.